A 478-amino-acid chain; its full sequence is Ribosomal RNA small subunit methyltransferase F (478 aa).

Residues 125–131 (AAAPGSK), E149, D176, and D194 contribute to the S-adenosyl-L-methionine site. C247 serves as the catalytic Nucleophile.

The protein belongs to the class I-like SAM-binding methyltransferase superfamily. RsmB/NOP family.

It is found in the cytoplasm. The catalysed reaction is cytidine(1407) in 16S rRNA + S-adenosyl-L-methionine = 5-methylcytidine(1407) in 16S rRNA + S-adenosyl-L-homocysteine + H(+). Specifically methylates the cytosine at position 1407 (m5C1407) of 16S rRNA. The protein is Ribosomal RNA small subunit methyltransferase F of Serratia proteamaculans (strain 568).